A 551-amino-acid chain; its full sequence is Glucans biosynthesis protein D (551 aa).

Positions 1–32 (MDRRRFIKGSMAMAAVCGTSGIASLFSQAAFA) form a signal peptide, tat-type signal.

It belongs to the OpgD/OpgG family. Predicted to be exported by the Tat system. The position of the signal peptide cleavage has not been experimentally proven.

It is found in the periplasm. The protein operates within glycan metabolism; osmoregulated periplasmic glucan (OPG) biosynthesis. In terms of biological role, probably involved in the control of the structural glucose backbone of osmoregulated periplasmic glucans (OPGs). The sequence is that of Glucans biosynthesis protein D from Escherichia coli O139:H28 (strain E24377A / ETEC).